We begin with the raw amino-acid sequence, 651 residues long: Mitogen-activated protein kinase kinase kinase 2 (651 aa).

The region spanning 68–330 (WRKGQLIGRG…ASELLKHPFV (263 aa)) is the Protein kinase domain. ATP contacts are provided by residues 74–82 (IGRGAFGTV) and K97. Positions 105-130 (CASKEKTQAHIQELEEEVKLLKNLSH) form a coiled coil. Residues K108 and K110 each participate in a glycyl lysine isopeptide (Lys-Gly) (interchain with G-Cter in ubiquitin) cross-link. The Proton acceptor role is filled by D196. 3 disordered regions span residues 460–483 (GNGE…DENE), 537–601 (RGFL…VALS), and 618–651 (KRRE…SPGK). Positions 464–477 (TETKVSMEVDHPSY) are enriched in basic and acidic residues. The span at 570-599 (SPESGNSSGAPKNSNASAGAEQESNSQSVA) shows a compositional bias: polar residues. A coiled-coil region spans residues 605–628 (RKWKEELDQELERKRREITRQAGM).

This sequence belongs to the protein kinase superfamily. STE Ser/Thr protein kinase family. MAP kinase kinase kinase subfamily. In terms of tissue distribution, expressed in roots and flowers.

The protein resides in the cytoplasm. The protein localises to the cytoskeleton. It catalyses the reaction L-seryl-[protein] + ATP = O-phospho-L-seryl-[protein] + ADP + H(+). The enzyme catalyses L-threonyl-[protein] + ATP = O-phospho-L-threonyl-[protein] + ADP + H(+). In terms of biological role, involved in cortical microtubules organization and stabilization by regulating the phosphorylation state of microtubule-associated proteins such as MAP65-1. The polypeptide is Mitogen-activated protein kinase kinase kinase 2 (ANP2) (Arabidopsis thaliana (Mouse-ear cress)).